The primary structure comprises 638 residues: 3D-(3,5/4)-trihydroxycyclohexane-1,2-dione hydrolase (638 aa).

Thiamine diphosphate is bound at residue Glu67. The tract at residues 442 to 523 (SLPGDLQRLW…INIMLFDNSG (82 aa)) is thiamine pyrophosphate binding. Mg(2+) contacts are provided by Asp494 and Asn521.

This sequence belongs to the TPP enzyme family. Mg(2+) serves as cofactor. Thiamine diphosphate is required as a cofactor.

It catalyses the reaction 3D-3,5/4-trihydroxycyclohexane-1,2-dione + H2O = 5-deoxy-D-glucuronate + H(+). The protein operates within polyol metabolism; myo-inositol degradation into acetyl-CoA; acetyl-CoA from myo-inositol: step 3/7. Functionally, involved in the cleavage of the C1-C2 bond of 3D-(3,5/4)-trihydroxycyclohexane-1,2-dione (THcHDO) to yield 5-deoxy-glucuronate (5DG). This chain is 3D-(3,5/4)-trihydroxycyclohexane-1,2-dione hydrolase, found in Listeria monocytogenes serovar 1/2a (strain ATCC BAA-679 / EGD-e).